Reading from the N-terminus, the 219-residue chain is Type-5 uracil-DNA glycosylase (219 aa).

The [4Fe-4S] cluster site is built by cysteine 13, cysteine 16, cysteine 115, and cysteine 130.

This sequence belongs to the uracil-DNA glycosylase (UDG) superfamily. Type 5 (UDGb) family.

Its function is as follows. DNA glycosylase with broad substrate specificity. Can remove uracil from double-stranded DNA containing either a U/G, U/A, U/C or U/T base pair. Can also excise hypoxanthine from double-stranded DNA containing G/I, T/I, and A/I base pairs, xanthine from both double-stranded and single stranded DNA, thymine from G/T mismatched DNA, 5'-hydroxymethyluracil and 5'-fluorouracil. The protein is Type-5 uracil-DNA glycosylase of Thermus thermophilus (strain ATCC 27634 / DSM 579 / HB8).